The primary structure comprises 452 residues: Dimethyladenosine transferase 2, mitochondrial (452 aa).

3 residues coordinate S-adenosyl-L-methionine: Ile-46, Glu-99, and Asp-125. Positions 408 to 452 are disordered; that stretch reads ANDEPNLEDGVTLPEEDDAEADEIIEEESPVPATTPVKRRRKASS. A compositionally biased stretch (acidic residues) spans 421 to 436; sequence PEEDDAEADEIIEEES.

Belongs to the class I-like SAM-binding methyltransferase superfamily. rRNA adenine N(6)-methyltransferase family. KsgA subfamily.

The protein resides in the mitochondrion. Its function is as follows. Probable S-adenosyl-L-methionine-dependent methyltransferase which specifically dimethylates mitochondrial 12S rRNA at the conserved stem loop. Also required for basal transcription of mitochondrial DNA. Also regulates mitochondrial DNA copy number. Stimulates transcription independently of the methyltransferase activity. The polypeptide is Dimethyladenosine transferase 2, mitochondrial (mtTFB2) (Drosophila melanogaster (Fruit fly)).